We begin with the raw amino-acid sequence, 358 residues long: tRNA-specific 2-thiouridylase MnmA (358 aa).

ATP is bound by residues 6–13 (AMSGGVDS) and Leu-32. Cys-101 serves as the catalytic Nucleophile. An intrachain disulfide couples Cys-101 to Cys-193. An ATP-binding site is contributed by Gly-125. The interaction with tRNA stretch occupies residues 143–145 (KDQ). Cys-193 acts as the Cysteine persulfide intermediate in catalysis.

This sequence belongs to the MnmA/TRMU family.

The protein resides in the cytoplasm. It carries out the reaction S-sulfanyl-L-cysteinyl-[protein] + uridine(34) in tRNA + AH2 + ATP = 2-thiouridine(34) in tRNA + L-cysteinyl-[protein] + A + AMP + diphosphate + H(+). Catalyzes the 2-thiolation of uridine at the wobble position (U34) of tRNA, leading to the formation of s(2)U34. The chain is tRNA-specific 2-thiouridylase MnmA from Mycobacterium leprae (strain Br4923).